Here is an 83-residue protein sequence, read N- to C-terminus: MFSWMKRGRSKETLKDRLELVLAYDRAQIPPGKVDALRNDLLEVVRRYFPTGNSSVEIEQRGDMVVLMANIPIDDTPPVRKSS.

Belongs to the MinE family.

In terms of biological role, prevents the cell division inhibition by proteins MinC and MinD at internal division sites while permitting inhibition at polar sites. This ensures cell division at the proper site by restricting the formation of a division septum at the midpoint of the long axis of the cell. The protein is Cell division topological specificity factor of Deinococcus deserti (strain DSM 17065 / CIP 109153 / LMG 22923 / VCD115).